The sequence spans 513 residues: 2-isopropylmalate synthase (513 aa).

The Pyruvate carboxyltransferase domain maps to 5 to 268 (LIIFDTTLRD…DVGVDTTQIV (264 aa)). Residues Asp14, His202, His204, and Asn239 each contribute to the Mn(2+) site. Residues 394–513 (RFVSLSQRSE…KSSEKLNPQI (120 aa)) form a regulatory domain region.

It belongs to the alpha-IPM synthase/homocitrate synthase family. LeuA type 1 subfamily. In terms of assembly, homodimer. Requires Mn(2+) as cofactor.

The protein localises to the cytoplasm. It carries out the reaction 3-methyl-2-oxobutanoate + acetyl-CoA + H2O = (2S)-2-isopropylmalate + CoA + H(+). It functions in the pathway amino-acid biosynthesis; L-leucine biosynthesis; L-leucine from 3-methyl-2-oxobutanoate: step 1/4. Its function is as follows. Catalyzes the condensation of the acetyl group of acetyl-CoA with 3-methyl-2-oxobutanoate (2-ketoisovalerate) to form 3-carboxy-3-hydroxy-4-methylpentanoate (2-isopropylmalate). The sequence is that of 2-isopropylmalate synthase from Ralstonia nicotianae (strain ATCC BAA-1114 / GMI1000) (Ralstonia solanacearum).